The primary structure comprises 364 residues: Aromatic prenyltransferase (364 aa).

The signal sequence occupies residues 1–22 (MDRNQWTLALMALMRFAHRAFI). Residues N142 and N337 are each glycosylated (N-linked (GlcNAc...) asparagine).

This sequence belongs to the aromatic prenyltransferase family.

Prenyltransferase that attaches isoprenoid moieties to carbon atoms of aromatic substrates in an enzyme-catalyzed Friedel-Crafts reaction. The chain is Aromatic prenyltransferase from Talaromyces marneffei (strain ATCC 18224 / CBS 334.59 / QM 7333) (Penicillium marneffei).